A 143-amino-acid polypeptide reads, in one-letter code: MSSDATNDELHRRLFDEGIKVRKDVLGSEYVENALRNATPFTRPGQELITEWAWGTVWQRPGLDRKQRSLLTLGLIIGQKAWLELGLHTRGAINNGVTELEIREAVLHAAVYCGTPSCIEAMIVTQKTINDMVDKGEYKRPEN.

This sequence belongs to the carboxymuconolactone decarboxylase family. Requires Mg(2+) as cofactor.

It functions in the pathway mycotoxin biosynthesis. Nitrosuccinic acid decarboxylase; part of the gene cluster that mediates the biosynthesis of the deadly neurotoxic nitroalkane 3-nitropropanoic acid (3-NPA) that acts as an antimetabolite of succinate and irreversibly inhibits succinate dehydrogenase and disrupts mitochondrial oxidative phosphorylation. NpaB facilitates decarboxylation of nitrosuccinic acid produced by the nitrosuccinic acid synthase npaA to yield the final product of the cluster, the lethal mycotoxin 3-NPA. In Metarhizium robertsii (strain ARSEF 23 / ATCC MYA-3075) (Metarhizium anisopliae (strain ARSEF 23)), this protein is Nitrosuccinic acid decarboxylase npaB.